Reading from the N-terminus, the 125-residue chain is Ixonnexin (125 aa).

Residues 1–21 (MGLTGTTLVLVCVAFFGSAAA) form the signal peptide. A glycan (N-linked (GlcNAc...) asparagine) is linked at Asn-26. Residues 81 to 125 (TSSGGPDDTGDNTPPPTEKPKQKKKKPKKTKKPKRKSKKDQKENF) form a disordered region. Basic residues predominate over residues 101–119 (KQKKKKPKKTKKPKRKSKK).

Belongs to the salp14 family. In terms of assembly, homodimer. Interacts with host PLG. Interacts with host PLAT. Saliva (at protein level).

It localises to the secreted. Salivary protein that promotes host fibrinolysis via accelerating host plasmin generation from plasminogen (PLG) initiated by tPA/tissue-type plasminogen activator (PLAT). Does not affect urokinase (PLAU)-mediated fibrinolysis in the host. Enhances amidolytic activity of host coagulation factor Xa (F10). The polypeptide is Ixonnexin (Ixodes scapularis (Black-legged tick)).